Here is a 123-residue protein sequence, read N- to C-terminus: MALKDTAKKMKDLLDSIQHDLAKAEKGNKAAAQRVRTDSIKLEKVAKLYRKESIKAEKSGLLKRKPSTKAPAKVKKTAEKKAPKKSSAAAAKTSKAVKASKPASKKTAAKKVKKPSKARGFRK.

Positions 54–123 are disordered; the sequence is IKAEKSGLLK…KPSKARGFRK (70 aa). Positions 61 to 75 are enriched in basic residues; the sequence is LLKRKPSTKAPAKVK. The span at 85 to 102 shows a compositional bias: low complexity; the sequence is KSSAAAAKTSKAVKASKP. Residues 103-123 are compositionally biased toward basic residues; it reads ASKKTAAKKVKKPSKARGFRK.

Belongs to the histone H1/H5 family. HCT subfamily.

In terms of biological role, might have a role analogous to that of eukaryotic histone proteins. In Chlamydia pneumoniae (Chlamydophila pneumoniae), this protein is Histone H1-like protein HC1 (hctA).